Here is an 86-residue protein sequence, read N- to C-terminus: Large ribosomal subunit protein bL27 (86 aa).

The span at 1-11 (MATKKAGGGSR) shows a compositional bias: gly residues. Residues 1 to 24 (MATKKAGGGSRNGRDSAGRRLGVK) are disordered.

This sequence belongs to the bacterial ribosomal protein bL27 family.

The polypeptide is Large ribosomal subunit protein bL27 (Rickettsia africae (strain ESF-5)).